A 418-amino-acid polypeptide reads, in one-letter code: Serine protease inhibitor A3K (418 aa).

The first 21 residues, 1 to 21, serve as a signal peptide directing secretion; the sequence is MAFIVAMGMILMAGICPAVLC. N-linked (GlcNAc...) asparagine glycans are attached at residues asparagine 39, asparagine 105, asparagine 185, and asparagine 270. The segment at 369 to 394 is RCL; that stretch reads GTEAAAATGVIGGIRKAILPAVHFNR.

Belongs to the serpin family. Expressed in liver and secreted in plasma.

It is found in the secreted. In terms of biological role, contrapsin inhibits trypsin-like proteases. The chain is Serine protease inhibitor A3K (Serpina3k) from Mus musculus (Mouse).